The following is a 162-amino-acid chain: MNKITHYFKSLLLLELLGGLWLTLKYTFKPKYTVLYPMEKFPQSPRFRGLHALRRYPNGEERCIACKLCEAVCPALAITIDSAKREDGTRRTTRYDIDLFKCIFCGFCEESCPVDSIVETHILEYHFEKRGENIINKPQLLAIGDRLETEIAERRAADAAFR.

4Fe-4S ferredoxin-type domains lie at 53–83 and 93–122; these read LRRYPNGEERCIACKLCEAVCPALAITIDSA and TRYDIDLFKCIFCGFCEESCPVDSIVETHI. 8 residues coordinate [4Fe-4S] cluster: Cys-63, Cys-66, Cys-69, Cys-73, Cys-102, Cys-105, Cys-108, and Cys-112.

This sequence belongs to the complex I 23 kDa subunit family. NDH-1 is composed of 14 different subunits. Subunits NuoA, H, J, K, L, M, N constitute the membrane sector of the complex. Requires [4Fe-4S] cluster as cofactor.

It is found in the cell inner membrane. It catalyses the reaction a quinone + NADH + 5 H(+)(in) = a quinol + NAD(+) + 4 H(+)(out). In terms of biological role, NDH-1 shuttles electrons from NADH, via FMN and iron-sulfur (Fe-S) centers, to quinones in the respiratory chain. The immediate electron acceptor for the enzyme in this species is believed to be ubiquinone. Couples the redox reaction to proton translocation (for every two electrons transferred, four hydrogen ions are translocated across the cytoplasmic membrane), and thus conserves the redox energy in a proton gradient. In Xanthomonas oryzae pv. oryzae (strain MAFF 311018), this protein is NADH-quinone oxidoreductase subunit I.